Consider the following 347-residue polypeptide: F-box/LRR-repeat/kelch-repeat protein At2g27520 (347 aa).

In terms of domain architecture, F-box spans 1 to 50 (MVRLDLPWDLVDEILSRLPATSLGRLRFTCKRWNALFKDPEFITKQFHKA). LRR repeat units lie at residues 59 to 82 (LSNF…EIAQ), 152 to 177 (CKLV…NVEK), 196 to 220 (KFNI…LYQD), and 261 to 285 (LSWS…ILRI). One copy of the Kelch 1 repeat lies at 138-187 (KSYDSYKILRITYGCKLVEIFELKSNSWRVLSKVHPNVEKHYYGGVSFKG). One copy of the Kelch 2 repeat lies at 306–347 (MIYIVGKNGFKKLSYEKDRSNLWRLPFFFSYVPSLVGLYPPM).

The sequence is that of F-box/LRR-repeat/kelch-repeat protein At2g27520 from Arabidopsis thaliana (Mouse-ear cress).